The sequence spans 167 residues: Interferon gamma (167 aa).

A signal peptide spans 1-23 (MNYTGYLLAFQLCIILGSSSCYC). At glutamine 24 the chain carries Pyrrolidone carboxylic acid. Asparagine 39 and asparagine 105 each carry an N-linked (GlcNAc...) asparagine glycan. Residues 148 to 167 (SNLRKRKRSQSTFHGRRASI) form a disordered region. The segment covering 149 to 167 (NLRKRKRSQSTFHGRRASI) has biased composition (basic residues).

The protein belongs to the type II (or gamma) interferon family. Homodimer. Interacts with IFNGR1 (via extracellular domain); this interaction promotes IFNGR1 dimerization. In terms of tissue distribution, released primarily from activated T lymphocytes.

Its subcellular location is the secreted. Functionally, type II interferon produced by immune cells such as T-cells and NK cells that plays crucial roles in antimicrobial, antiviral, and antitumor responses by activating effector immune cells and enhancing antigen presentation. Primarily signals through the JAK-STAT pathway after interaction with its receptor IFNGR1 to affect gene regulation. Upon IFNG binding, IFNGR1 intracellular domain opens out to allow association of downstream signaling components JAK2, JAK1 and STAT1, leading to STAT1 activation, nuclear translocation and transcription of IFNG-regulated genes. Many of the induced genes are transcription factors such as IRF1 that are able to further drive regulation of a next wave of transcription. Plays a role in class I antigen presentation pathway by inducing a replacement of catalytic proteasome subunits with immunoproteasome subunits. In turn, increases the quantity, quality, and repertoire of peptides for class I MHC loading. Increases the efficiency of peptide generation also by inducing the expression of activator PA28 that associates with the proteasome and alters its proteolytic cleavage preference. Up-regulates as well MHC II complexes on the cell surface by promoting expression of several key molecules such as cathepsins B/CTSB, H/CTSH, and L/CTSL. Participates in the regulation of hematopoietic stem cells during development and under homeostatic conditions by affecting their development, quiescence, and differentiation. The polypeptide is Interferon gamma (IFNG) (Dasypus novemcinctus (Nine-banded armadillo)).